Reading from the N-terminus, the 270-residue chain is Protein-ADP-ribose hydrolase (270 aa).

Residues 73-267 form the Macro domain; the sequence is VSVKDCQKTN…LYDTYLQKEN (195 aa). The ADP-D-ribose site is built by Asp-92, Ile-93, and Asn-106. Cys-112, His-117, and Cys-119 together coordinate Zn(2+). Residues Cys-119, Ile-120, Asp-121, Ser-212, Thr-213, Gly-214, Glu-215, and Phe-216 each contribute to the ADP-D-ribose site.

Belongs to the MacroD-type family. Zn-Macro subfamily. The cofactor is Zn(2+).

It catalyses the reaction 4-O-(ADP-D-ribosyl)-L-aspartyl-[protein] + H2O = L-aspartyl-[protein] + ADP-D-ribose + H(+). Functionally, ADP-ribosylhydrolase that specifically reverses the SirTM-mediated mono-ADP-ribosylation at an asparatate residue of GcvH-L, by releasing ADP-ribose from the target protein. May play a role in the regulation of the response to host-induced oxidative stress. This chain is Protein-ADP-ribose hydrolase, found in Streptococcus pyogenes serotype M18 (strain MGAS8232).